The chain runs to 297 residues: 1D-myo-inositol 2-acetamido-2-deoxy-alpha-D-glucopyranoside deacetylase (297 aa).

Zn(2+)-binding residues include His11, Asp14, and His154.

The protein belongs to the MshB deacetylase family. Zn(2+) serves as cofactor.

The enzyme catalyses 1D-myo-inositol 2-acetamido-2-deoxy-alpha-D-glucopyranoside + H2O = 1D-myo-inositol 2-amino-2-deoxy-alpha-D-glucopyranoside + acetate. Its function is as follows. Catalyzes the deacetylation of 1D-myo-inositol 2-acetamido-2-deoxy-alpha-D-glucopyranoside (GlcNAc-Ins) in the mycothiol biosynthesis pathway. This is 1D-myo-inositol 2-acetamido-2-deoxy-alpha-D-glucopyranoside deacetylase from Tsukamurella paurometabola (strain ATCC 8368 / DSM 20162 / CCUG 35730 / CIP 100753 / JCM 10117 / KCTC 9821 / NBRC 16120 / NCIMB 702349 / NCTC 13040) (Corynebacterium paurometabolum).